We begin with the raw amino-acid sequence, 439 residues long: Homogentisate 1,2-dioxygenase (439 aa).

Histidine 289 serves as the catalytic Proton acceptor. Residues histidine 332 and glutamate 338 each contribute to the Fe cation site. Homogentisate-binding residues include tyrosine 347 and histidine 368. A Fe cation-binding site is contributed by histidine 368.

This sequence belongs to the homogentisate dioxygenase family. As to quaternary structure, hexamer; dimer of trimers. Requires Fe cation as cofactor.

The enzyme catalyses homogentisate + O2 = 4-maleylacetoacetate + H(+). It functions in the pathway amino-acid degradation; L-phenylalanine degradation; acetoacetate and fumarate from L-phenylalanine: step 4/6. Its function is as follows. Involved in the catabolism of homogentisate (2,5-dihydroxyphenylacetate or 2,5-OH-PhAc), a central intermediate in the degradation of phenylalanine and tyrosine. Catalyzes the oxidative ring cleavage of the aromatic ring of homogentisate to yield maleylacetoacetate. The protein is Homogentisate 1,2-dioxygenase of Xanthomonas euvesicatoria pv. vesicatoria (strain 85-10) (Xanthomonas campestris pv. vesicatoria).